Consider the following 117-residue polypeptide: Ribonuclease P protein component (117 aa).

It belongs to the RnpA family. As to quaternary structure, consists of a catalytic RNA component (M1 or rnpB) and a protein subunit.

The enzyme catalyses Endonucleolytic cleavage of RNA, removing 5'-extranucleotides from tRNA precursor.. In terms of biological role, RNaseP catalyzes the removal of the 5'-leader sequence from pre-tRNA to produce the mature 5'-terminus. It can also cleave other RNA substrates such as 4.5S RNA. The protein component plays an auxiliary but essential role in vivo by binding to the 5'-leader sequence and broadening the substrate specificity of the ribozyme. This is Ribonuclease P protein component from Thermotoga maritima (strain ATCC 43589 / DSM 3109 / JCM 10099 / NBRC 100826 / MSB8).